A 352-amino-acid polypeptide reads, in one-letter code: uncharacterized protein (352 aa).

A disordered region spans residues 1-40; it reads MTSTMKLFTDHAEISVRERPPQRNNNNQEQDNSNRPAPRR. The span at 8-21 shows a compositional bias: basic and acidic residues; it reads FTDHAEISVRERPP. Residues 22–36 are compositionally biased toward low complexity; the sequence is QRNNNNQEQDNSNRP. Residues 317-333 form a helical membrane-spanning segment; that stretch reads MTITLPCGLTIAFFVYY.

Its subcellular location is the host cell membrane. This is an uncharacterized protein from Diadromus pulchellus idnoreovirus 1 (DpIRV-1).